The primary structure comprises 330 residues: Beta-ketoacyl-[acyl-carrier-protein] synthase III (330 aa).

Residues cysteine 114 and histidine 257 contribute to the active site. Residues 258–262 (QANLR) form an ACP-binding region. The active site involves asparagine 287.

The protein belongs to the thiolase-like superfamily. FabH family. In terms of assembly, homodimer.

It localises to the cytoplasm. It catalyses the reaction malonyl-[ACP] + acetyl-CoA + H(+) = 3-oxobutanoyl-[ACP] + CO2 + CoA. It functions in the pathway lipid metabolism; fatty acid biosynthesis. Its function is as follows. Catalyzes the condensation reaction of fatty acid synthesis by the addition to an acyl acceptor of two carbons from malonyl-ACP. Catalyzes the first condensation reaction which initiates fatty acid synthesis and may therefore play a role in governing the total rate of fatty acid production. Possesses both acetoacetyl-ACP synthase and acetyl transacylase activities. Its substrate specificity determines the biosynthesis of branched-chain and/or straight-chain of fatty acids. This Oleidesulfovibrio alaskensis (strain ATCC BAA-1058 / DSM 17464 / G20) (Desulfovibrio alaskensis) protein is Beta-ketoacyl-[acyl-carrier-protein] synthase III.